Consider the following 287-residue polypeptide: O-ureido-serine racemase (287 aa).

Residue Asn20 coordinates substrate. The active-site Proton donor is the Cys81. Residues 82-83, Asn167, Asn200, and 218-219 each bind substrate; these read GN and EY. Cys227 functions as the Proton acceptor in the catalytic mechanism. 228–229 is a substrate binding site; that stretch reads GS.

The protein belongs to the diaminopimelate epimerase family. In terms of assembly, monomer.

Its subcellular location is the cytoplasm. The enzyme catalyses O-ureido-L-serine = O-ureido-D-serine. Inhibited by thiol-inactivating reagents such as iodoacetamide and Hg(2+) ions. Functionally, involved in the biosynthesis of the antibiotic D-cycloserine (DCS), a cyclic structural analog of D-alanine, used as an antitubercular agent. Catalyzes the stereoinversion of O-ureido-L-serine to O-ureido-D-serine. In Streptomyces lavendulae, this protein is O-ureido-serine racemase.